A 99-amino-acid chain; its full sequence is Leydig cell tumor 10 kDa protein homolog (99 aa).

Positions 1–37 (MAQGQRKFQARKPAKSKTAATASEKNRGPRKGGRVIA) are disordered. Over residues 28–37 (GPRKGGRVIA) the composition is skewed to basic residues.

Belongs to the UPF0390 family.

Its function is as follows. May have a potential role in hypercalcemia of malignancy. The chain is Leydig cell tumor 10 kDa protein homolog from Pongo abelii (Sumatran orangutan).